Here is a 194-residue protein sequence, read N- to C-terminus: Nucleoside triphosphate pyrophosphatase (194 aa).

Asp68 (proton acceptor) is an active-site residue.

Belongs to the Maf family. A divalent metal cation is required as a cofactor.

The protein resides in the cytoplasm. The enzyme catalyses a ribonucleoside 5'-triphosphate + H2O = a ribonucleoside 5'-phosphate + diphosphate + H(+). It catalyses the reaction a 2'-deoxyribonucleoside 5'-triphosphate + H2O = a 2'-deoxyribonucleoside 5'-phosphate + diphosphate + H(+). In terms of biological role, nucleoside triphosphate pyrophosphatase. May have a dual role in cell division arrest and in preventing the incorporation of modified nucleotides into cellular nucleic acids. This is Nucleoside triphosphate pyrophosphatase from Corynebacterium jeikeium (strain K411).